A 218-amino-acid chain; its full sequence is N-(5'-phosphoribosyl)anthranilate isomerase (218 aa).

This sequence belongs to the TrpF family.

It carries out the reaction N-(5-phospho-beta-D-ribosyl)anthranilate = 1-(2-carboxyphenylamino)-1-deoxy-D-ribulose 5-phosphate. It functions in the pathway amino-acid biosynthesis; L-tryptophan biosynthesis; L-tryptophan from chorismate: step 3/5. This chain is N-(5'-phosphoribosyl)anthranilate isomerase, found in Halalkalibacterium halodurans (strain ATCC BAA-125 / DSM 18197 / FERM 7344 / JCM 9153 / C-125) (Bacillus halodurans).